Reading from the N-terminus, the 391-residue chain is Methyltransferase/ribosomally synthesized type I borosin cyclic peptide precursor cmaMA (391 aa).

A methyltransferase domain region spans residues 1–253 (MDATANPKAG…TISTFYLPPK (253 aa)). Active-site residues include Arg-72, Tyr-76, and Tyr-98. Residues Tyr-98, His-100, Val-103, Ala-130, Gln-172, Ala-215, Ser-246, and Thr-247 each contribute to the S-adenosyl-L-methionine site. The segment at 254–373 (APSAKVSLNR…AQLSGALKEG (120 aa)) is clasp domain. The interval 374–376 (GVP) is precursor leader. N-methylleucine is present on Leu-382. Residues Phe-385 and Phe-386 each carry the N-methylphenylalanine modification. Residues Ile-387 and Ile-388 each carry the N-methylisoleucine modification.

In the N-terminal section; belongs to the precorrin methyltransferase family. Homodimer. Post-translationally, cmaMA automethylates at Leu-382, Phe-385, Phe-386, Ile-387 and Ile-388 before being processed by the prolyloligopeptidase ledP which likely forms a peptidyl ester upon removal of the follower propeptide, which then undergoes macrocyclization with the N-terminus of the modified core peptide. Peptide backbone alpha-N-methylations change the physicochemical properties of amide bonds to provide structural constraints and other favorable characteristics including biological membrane permeability to peptides.

It functions in the pathway secondary metabolite biosynthesis. Fusion protein of the methyltransferase cmaM and a type I borosin core peptide; part of the gene cluster that mediates the biosynthesis of a type I borosin, a highly methylated cyclic peptide with potent biological activities. Type I borosins derive from the C-terminus of the fusion protein, and it is the same protein that methylates its own C-terminus using S-adenosyl methionine (SAM). The C-terminus is subsequently cleaved off and macrocyclized by a prolyloligopeptidase to give the final product. This is Methyltransferase/ribosomally synthesized type I borosin cyclic peptide precursor cmaMA from Coprinopsis marcescibilis (Agaric fungus).